Consider the following 279-residue polypeptide: Cell division protein FtsQ (279 aa).

Residues 1–28 form a disordered region; sequence MTPMKKQLDKSLGSRRGATATRAKERAD. Topologically, residues 1–48 are cytoplasmic; it reads MTPMKKQLDKSLGSRRGATATRAKERADNRNTGPAAIVRLLAFIPWNR. Residues 49 to 69 form a helical membrane-spanning segment; sequence VLLHVSIFCFWLLVLSALIAG. Residues 70–279 are Periplasmic-facing; sequence VKWLDRPVAT…WKADVTPEQG (210 aa). In terms of domain architecture, POTRA spans 75 to 144; it reads RPVATVQVVG…DAVQVDLEEE (70 aa).

Belongs to the FtsQ/DivIB family. FtsQ subfamily. In terms of assembly, part of a complex composed of FtsB, FtsL and FtsQ.

The protein localises to the cell inner membrane. Functionally, essential cell division protein. May link together the upstream cell division proteins, which are predominantly cytoplasmic, with the downstream cell division proteins, which are predominantly periplasmic. May control correct divisome assembly. This Hahella chejuensis (strain KCTC 2396) protein is Cell division protein FtsQ.